The chain runs to 236 residues: 7-cyano-7-deazaguanine synthase (236 aa).

7–17 (CSGGLDSVSLA) serves as a coordination point for ATP. Zn(2+) contacts are provided by Cys185, Cys193, Cys196, and Cys199.

It belongs to the QueC family. Zn(2+) serves as cofactor.

The enzyme catalyses 7-carboxy-7-deazaguanine + NH4(+) + ATP = 7-cyano-7-deazaguanine + ADP + phosphate + H2O + H(+). The protein operates within purine metabolism; 7-cyano-7-deazaguanine biosynthesis. In terms of biological role, catalyzes the ATP-dependent conversion of 7-carboxy-7-deazaguanine (CDG) to 7-cyano-7-deazaguanine (preQ(0)). The polypeptide is 7-cyano-7-deazaguanine synthase (Rhizobium etli (strain ATCC 51251 / DSM 11541 / JCM 21823 / NBRC 15573 / CFN 42)).